Consider the following 181-residue polypeptide: UPF0301 protein COXBURSA331_A2219 (181 aa).

It belongs to the UPF0301 (AlgH) family.

This Coxiella burnetii (strain RSA 331 / Henzerling II) protein is UPF0301 protein COXBURSA331_A2219.